We begin with the raw amino-acid sequence, 412 residues long: Isocitrate dehydrogenase [NADP] cytoplasmic (412 aa).

NADP(+)-binding positions include 76 to 78 (TIT) and Arg83. Thr78 lines the substrate pocket. Substrate is bound by residues 95–101 (SPNGTIR), Arg110, and Arg133. Position 253 (Asp253) interacts with Mn(2+). Lys261 lines the NADP(+) pocket. Mn(2+) is bound at residue Asp276. NADP(+) contacts are provided by residues 309–314 (GTVTRH) and Asn327.

Belongs to the isocitrate and isopropylmalate dehydrogenases family. In terms of assembly, homodimer. It depends on Mg(2+) as a cofactor. The cofactor is Mn(2+).

The protein localises to the cytoplasm. It catalyses the reaction D-threo-isocitrate + NADP(+) = 2-oxoglutarate + CO2 + NADPH. The polypeptide is Isocitrate dehydrogenase [NADP] cytoplasmic (idhC) (Dictyostelium discoideum (Social amoeba)).